Here is a 143-residue protein sequence, read N- to C-terminus: Small ribosomal subunit protein uS9 (143 aa).

A disordered region spans residues 124–143 (PEPKKFGGKGARARFQKSYR). The span at 134-143 (ARARFQKSYR) shows a compositional bias: basic residues.

This sequence belongs to the universal ribosomal protein uS9 family.

The sequence is that of Small ribosomal subunit protein uS9 (RPS16) from Candida glabrata (strain ATCC 2001 / BCRC 20586 / JCM 3761 / NBRC 0622 / NRRL Y-65 / CBS 138) (Yeast).